A 354-amino-acid polypeptide reads, in one-letter code: Alternative oxidase, mitochondrial (354 aa).

The N-terminal 64 residues, 1-64, are a transit peptide targeting the mitochondrion; that stretch reads MNSMSTTGPI…RFISSTPQSQ (64 aa). Residues 153–173 traverse the membrane as a helical segment; that stretch reads FVFLESVAGVPGMVGGMLRHL. Fe cation-binding residues include Glu157, Glu196, and His199. A helical membrane pass occupies residues 215–235; the sequence is LMVLGAQGVFFNGFFLSYLIS. Fe cation contacts are provided by Glu247, Glu302, and His305. Residues 333–354 form a disordered region; that stretch reads KPHPGKGIKHLKTTGWEREEVV. Positions 335–344 are enriched in basic residues; the sequence is HPGKGIKHLK.

It belongs to the alternative oxidase family. The cofactor is Fe cation.

It is found in the mitochondrion inner membrane. In terms of biological role, catalyzes cyanide-resistant oxygen consumption. May increase respiration when the cytochrome respiratory pathway is restricted, or in response to low temperatures. The sequence is that of Alternative oxidase, mitochondrial (alxA) from Emericella nidulans (strain FGSC A4 / ATCC 38163 / CBS 112.46 / NRRL 194 / M139) (Aspergillus nidulans).